The following is a 507-amino-acid chain: Glucose-6-phosphate 1-dehydrogenase (507 aa).

Positions 57 and 168 each coordinate NADP(+). Substrate contacts are provided by histidine 198, lysine 202, glutamate 236, and aspartate 255. The active-site Proton acceptor is the histidine 260. Residue lysine 356 participates in substrate binding.

The protein belongs to the glucose-6-phosphate dehydrogenase family.

The catalysed reaction is D-glucose 6-phosphate + NADP(+) = 6-phospho-D-glucono-1,5-lactone + NADPH + H(+). The protein operates within carbohydrate degradation; pentose phosphate pathway; D-ribulose 5-phosphate from D-glucose 6-phosphate (oxidative stage): step 1/3. Functionally, catalyzes the oxidation of glucose 6-phosphate to 6-phosphogluconolactone. This is Glucose-6-phosphate 1-dehydrogenase from Chlamydia muridarum (strain MoPn / Nigg).